The chain runs to 251 residues: NADH-quinone oxidoreductase subunit C (251 aa).

Residues 1 to 34 (MSDANNTAGDANEVNPEKDLSAENLPGQRGQGGE) are disordered.

Belongs to the complex I 30 kDa subunit family. In terms of assembly, NDH-1 is composed of 14 different subunits. Subunits NuoB, C, D, E, F, and G constitute the peripheral sector of the complex.

The protein localises to the cell membrane. It catalyses the reaction a quinone + NADH + 5 H(+)(in) = a quinol + NAD(+) + 4 H(+)(out). Its function is as follows. NDH-1 shuttles electrons from NADH, via FMN and iron-sulfur (Fe-S) centers, to quinones in the respiratory chain. The immediate electron acceptor for the enzyme in this species is believed to be a menaquinone. Couples the redox reaction to proton translocation (for every two electrons transferred, four hydrogen ions are translocated across the cytoplasmic membrane), and thus conserves the redox energy in a proton gradient. The polypeptide is NADH-quinone oxidoreductase subunit C (Streptomyces coelicolor (strain ATCC BAA-471 / A3(2) / M145)).